Reading from the N-terminus, the 227-residue chain is Ribosomal RNA large subunit methyltransferase E (227 aa).

The S-adenosyl-L-methionine site is built by glycine 78, tryptophan 80, aspartate 103, aspartate 119, and aspartate 143. Lysine 183 functions as the Proton acceptor in the catalytic mechanism.

The protein belongs to the class I-like SAM-binding methyltransferase superfamily. RNA methyltransferase RlmE family.

It is found in the cytoplasm. It catalyses the reaction uridine(2552) in 23S rRNA + S-adenosyl-L-methionine = 2'-O-methyluridine(2552) in 23S rRNA + S-adenosyl-L-homocysteine + H(+). Its function is as follows. Specifically methylates the uridine in position 2552 of 23S rRNA at the 2'-O position of the ribose in the fully assembled 50S ribosomal subunit. This is Ribosomal RNA large subunit methyltransferase E from Rickettsia canadensis (strain McKiel).